Here is a 321-residue protein sequence, read N- to C-terminus: tRNA(Ile)-lysidine synthase (321 aa).

An ATP-binding site is contributed by 30–35 (SGGSDS).

The protein belongs to the tRNA(Ile)-lysidine synthase family.

It is found in the cytoplasm. The catalysed reaction is cytidine(34) in tRNA(Ile2) + L-lysine + ATP = lysidine(34) in tRNA(Ile2) + AMP + diphosphate + H(+). Functionally, ligates lysine onto the cytidine present at position 34 of the AUA codon-specific tRNA(Ile) that contains the anticodon CAU, in an ATP-dependent manner. Cytidine is converted to lysidine, thus changing the amino acid specificity of the tRNA from methionine to isoleucine. This Chlamydia trachomatis serovar D (strain ATCC VR-885 / DSM 19411 / UW-3/Cx) protein is tRNA(Ile)-lysidine synthase.